Here is a 163-residue protein sequence, read N- to C-terminus: Centrosomal protein of 19 kDa (163 aa).

It belongs to the CEP19 family. In terms of assembly, interacts with CEP43; this interaction is required for its localization to the mother centriole. Interacts (via residues 121-150) with RABL2B. Interacts (via C-terminus) with CEP350; this interaction is required for its localization to the mother centriole.

Its subcellular location is the cytoplasm. The protein localises to the cytoskeleton. It localises to the microtubule organizing center. It is found in the centrosome. The protein resides in the centriole. Its subcellular location is the spindle pole. The protein localises to the cilium basal body. Required for ciliation. Recruits the RABL2B GTPase to the ciliary base to initiate ciliation. After specifically capturing the activated GTP-bound RABL2B, the CEP19-RABL2B complex binds intraflagellar transport (IFT) complex B from the large pool pre-docked at the base of the cilium and thus triggers its entry into the cilia. Involved in the early steps in cilia formation by recruiting the ciliary vesicles (CVs) to the distal end of the mother centriole where they fuse to initiate cilium assembly. Involved in microtubule (MT) anchoring to the centrosomes. This chain is Centrosomal protein of 19 kDa (CEP19), found in Homo sapiens (Human).